Consider the following 158-residue polypeptide: Salt stress-responsive protein YocM (158 aa).

The region spanning Gly-51 to Asp-158 is the sHSP domain.

Belongs to the small heat shock protein (HSP20) family. As to quaternary structure, forms homodimers, homotetramers and higher oligomers.

The protein resides in the cytoplasm. In terms of biological role, part of the cellular protein quality control system with a specific role in salt stress response. May facilitate protein homeostasis, together with chemical chaperones that accumulate during the salt stress response. Increased levels of YocM protects against both heat and salt stress. In vitro, displays an unusual aggregase chaperone activity. The chain is Salt stress-responsive protein YocM (yocM) from Bacillus subtilis (strain 168).